The chain runs to 224 residues: Heme response regulator HssR (224 aa).

Residues 3–116 form the Response regulatory domain; the sequence is KCLIVDDDYK…ELLFRIQAVL (114 aa). The residue at position 52 (Asp52) is a 4-aspartylphosphate. The segment at residues 124–222 is a DNA-binding region (ompR/PhoB-type); sequence QDIIKLGNVT…VRGQGYRVIT (99 aa).

Post-translationally, phosphorylated by HssS.

It is found in the cytoplasm. Member of the two-component regulatory system HssS/HssR involved in intracellular heme homeostasis and tempering of staphylococcal virulence. Phosphorylated HssR binds to a direct repeat sequence within hrtAB promoter and activates the expression of hrtAB, an efflux pump, in response to extracellular heme, hemin, hemoglobin or blood. The chain is Heme response regulator HssR (hssR) from Staphylococcus haemolyticus (strain JCSC1435).